We begin with the raw amino-acid sequence, 435 residues long: Fez family zinc finger protein 2 (435 aa).

The Engrailed homology 1 repressor motif lies at 27-42 (SLAFSIERIMAKTSEP). C2H2-type zinc fingers lie at residues 254–276 (FTCEVCGKVFNAHYNLTRHMPVH), 282–304 (FVCKVCGKGFRQASTLCRHKIIH), 310–332 (HKCNQCGKAFNRSSTLNTHIRIH), 338–360 (FVCEFCGKGFHQKGNYKNHKLTH), 366–388 (YKCTICNKAFHQIYNLTFHMHTH), and 394–417 (FTCGTCGKGFCRNFDLKKHVRKLH).

It belongs to the krueppel C2H2-type zinc-finger protein family.

It is found in the nucleus. Its function is as follows. Transcription repressor. Component of the regulatory cascade that controls the development of dopaminergic (DA) and serotonergic (5HT) neurons. This is Fez family zinc finger protein 2 (fezf2) from Xenopus tropicalis (Western clawed frog).